We begin with the raw amino-acid sequence, 124 residues long: Small ribosomal subunit protein uS13 (124 aa).

The segment at 95-124 (GLPVRGQRTRHNARTRKGPRKTVGAKKGKR) is disordered. The segment covering 101 to 124 (QRTRHNARTRKGPRKTVGAKKGKR) has biased composition (basic residues).

This sequence belongs to the universal ribosomal protein uS13 family. Part of the 30S ribosomal subunit. Forms a loose heterodimer with protein S19. Forms two bridges to the 50S subunit in the 70S ribosome.

In terms of biological role, located at the top of the head of the 30S subunit, it contacts several helices of the 16S rRNA. In the 70S ribosome it contacts the 23S rRNA (bridge B1a) and protein L5 of the 50S subunit (bridge B1b), connecting the 2 subunits; these bridges are implicated in subunit movement. Contacts the tRNAs in the A and P-sites. The protein is Small ribosomal subunit protein uS13 of Coprothermobacter proteolyticus (strain ATCC 35245 / DSM 5265 / OCM 4 / BT).